A 305-amino-acid polypeptide reads, in one-letter code: Putative glutamine amidotransferase MTH_191 (305 aa).

C2 is a catalytic residue. A Glutamine amidotransferase type-2 domain is found at 2 to 305; that stretch reads CGIAGVVYKD…SPGEVRVYEI (304 aa).

This chain is Putative glutamine amidotransferase MTH_191, found in Methanothermobacter thermautotrophicus (strain ATCC 29096 / DSM 1053 / JCM 10044 / NBRC 100330 / Delta H) (Methanobacterium thermoautotrophicum).